The sequence spans 177 residues: SsrA-binding protein (177 aa).

Disordered regions lie at residues 1–23 and 148–177; these read MYVP…KDGK and YDKR…QRGE. Positions 148–165 are enriched in basic and acidic residues; the sequence is YDKRQTLREKQDRRESDR.

The protein belongs to the SmpB family.

It is found in the cytoplasm. Its function is as follows. Required for rescue of stalled ribosomes mediated by trans-translation. Binds to transfer-messenger RNA (tmRNA), required for stable association of tmRNA with ribosomes. tmRNA and SmpB together mimic tRNA shape, replacing the anticodon stem-loop with SmpB. tmRNA is encoded by the ssrA gene; the 2 termini fold to resemble tRNA(Ala) and it encodes a 'tag peptide', a short internal open reading frame. During trans-translation Ala-aminoacylated tmRNA acts like a tRNA, entering the A-site of stalled ribosomes, displacing the stalled mRNA. The ribosome then switches to translate the ORF on the tmRNA; the nascent peptide is terminated with the 'tag peptide' encoded by the tmRNA and targeted for degradation. The ribosome is freed to recommence translation, which seems to be the essential function of trans-translation. In Streptomyces avermitilis (strain ATCC 31267 / DSM 46492 / JCM 5070 / NBRC 14893 / NCIMB 12804 / NRRL 8165 / MA-4680), this protein is SsrA-binding protein.